Here is a 503-residue protein sequence, read N- to C-terminus: Maturase K (503 aa).

The protein belongs to the intron maturase 2 family. MatK subfamily.

It localises to the plastid. It is found in the chloroplast. Usually encoded in the trnK tRNA gene intron. Probably assists in splicing its own and other chloroplast group II introns. The chain is Maturase K from Callistemon polandii (Gold-tipped bottlebrush).